A 162-amino-acid chain; its full sequence is ATP synthase subunit b (162 aa).

The chain crosses the membrane as a helical span at residues 8–28; the sequence is LTGIIQLLNFLILLFVLYKFL.

The protein belongs to the ATPase B chain family. In terms of assembly, F-type ATPases have 2 components, F(1) - the catalytic core - and F(0) - the membrane proton channel. F(1) has five subunits: alpha(3), beta(3), gamma(1), delta(1), epsilon(1). F(0) has three main subunits: a(1), b(2) and c(10-14). The alpha and beta chains form an alternating ring which encloses part of the gamma chain. F(1) is attached to F(0) by a central stalk formed by the gamma and epsilon chains, while a peripheral stalk is formed by the delta and b chains.

It localises to the cell inner membrane. F(1)F(0) ATP synthase produces ATP from ADP in the presence of a proton or sodium gradient. F-type ATPases consist of two structural domains, F(1) containing the extramembraneous catalytic core and F(0) containing the membrane proton channel, linked together by a central stalk and a peripheral stalk. During catalysis, ATP synthesis in the catalytic domain of F(1) is coupled via a rotary mechanism of the central stalk subunits to proton translocation. In terms of biological role, component of the F(0) channel, it forms part of the peripheral stalk, linking F(1) to F(0). The protein is ATP synthase subunit b of Pseudothermotoga lettingae (strain ATCC BAA-301 / DSM 14385 / NBRC 107922 / TMO) (Thermotoga lettingae).